Here is a 590-residue protein sequence, read N- to C-terminus: UvrABC system protein C (590 aa).

Residues D14–V91 enclose the GIY-YIG domain. Positions Q196–T231 constitute a UVR domain.

It belongs to the UvrC family. In terms of assembly, interacts with UvrB in an incision complex.

It localises to the cytoplasm. The UvrABC repair system catalyzes the recognition and processing of DNA lesions. UvrC both incises the 5' and 3' sides of the lesion. The N-terminal half is responsible for the 3' incision and the C-terminal half is responsible for the 5' incision. This Bacillus pumilus (strain SAFR-032) protein is UvrABC system protein C.